The chain runs to 1015 residues: GTPase-activating Rap/Ran-GAP domain-like protein 3 (1015 aa).

A Rap-GAP domain is found at 200-416; the sequence is LLVLEEQEGS…RTLDMLIRSL (217 aa). The CNH domain maps to 498 to 812; sequence PYDIVCGDSW…QLTASRSDIY (315 aa). 2 disordered regions span residues 821 to 842 and 924 to 1004; these read SASNCSSRDTSSQSSPQTPTGY and ELLG…FTFS. Low complexity predominate over residues 823–835; it reads SNCSSRDTSSQSS. The span at 949–959 shows a compositional bias: basic and acidic residues; that stretch reads KNKEEEQKRTA.

This sequence belongs to the GARNL3 family.

The chain is GTPase-activating Rap/Ran-GAP domain-like protein 3 (garnl3) from Danio rerio (Zebrafish).